The sequence spans 166 residues: Vasopressin-neurophysin 2-copeptin (166 aa).

The first 19 residues, 1-19, serve as a signal peptide directing secretion; sequence MPDATLPACFLSLLAFTSA. The cysteines at positions 20 and 25 are disulfide-linked. Glycine 28 carries the glycine amide modification. 7 disulfide bridges follow: cysteine 41–cysteine 85, cysteine 44–cysteine 58, cysteine 52–cysteine 75, cysteine 59–cysteine 65, cysteine 92–cysteine 104, cysteine 98–cysteine 116, and cysteine 105–cysteine 110. The N-linked (GlcNAc...) asparagine glycan is linked to asparagine 133.

This sequence belongs to the vasopressin/oxytocin family. In terms of assembly, interacts with vasopressin receptors V1bR/AVPR1B (Ki=85 pM), V1aR/AVPR1A (Ki=0.6 nM) and V2R/AVPR2 (Ki=4.9 nM). Interacts with oxytocin receptor (OXTR) (Ki=110 nM).

The protein localises to the secreted. Neurophysin 2 specifically binds vasopressin. In terms of biological role, vasopressin has a direct antidiuretic action on the kidney, it also causes vasoconstriction of the peripheral vessels. Acts by binding to vasopressin receptors (V1bR/AVPR1B, V1aR/AVPR1A, and V2R/AVPR2). The sequence is that of Vasopressin-neurophysin 2-copeptin (AVP) from Bos taurus (Bovine).